Consider the following 219-residue polypeptide: Protein YNG1 (219 aa).

A PHD-type; degenerate zinc finger spans residues 155-204 (EVYCFCRNVSYGPMVACDNPACPFEWFHYGCVGLKQAPKGKWYCSKDCKE). Cys158, Cys160, Cys171, Cys176, His182, Cys185, Cys198, and Cys202 together coordinate Zn(2+).

This sequence belongs to the ING family. As to quaternary structure, component of the NuA3 histone acetyltransferase (HAT) complex. The NuA3 HAT complex has 2 functionally distinct forms that participate in transcription. The NuA3a HAT complex is composed of at least NTO1, SAS3, TAF14, YNG1 and EAF6. The NuA3b HAT complex contains an additional subunit, PDP3. Interacts with H3K4me3 and to a lesser extent with H3K4me2.

Its subcellular location is the nucleus. Its function is as follows. Histone-binding component of the NuA3a histone acetyltransferase complex. Targets the NuA3a HAT complex via histone H3K4me3 to facilitate transcription initiation at promoter regions. SAS3 then acetylates H3K14, leading to transcription initiation at a subset of genes. YNG1 is required for the HAT activity of NuA3 but not for its integrity. Mediates the interaction of SAS3 with nucleosomes. The chain is Protein YNG1 (YNG1) from Saccharomyces cerevisiae (strain ATCC 204508 / S288c) (Baker's yeast).